A 69-amino-acid polypeptide reads, in one-letter code: DNA gyrase inhibitor YacG (69 aa).

Zn(2+) contacts are provided by cysteine 13, cysteine 16, cysteine 32, and cysteine 36.

It belongs to the DNA gyrase inhibitor YacG family. Interacts with GyrB. Requires Zn(2+) as cofactor.

Inhibits all the catalytic activities of DNA gyrase by preventing its interaction with DNA. Acts by binding directly to the C-terminal domain of GyrB, which probably disrupts DNA binding by the gyrase. The protein is DNA gyrase inhibitor YacG of Neisseria meningitidis serogroup B (strain ATCC BAA-335 / MC58).